The primary structure comprises 446 residues: Trigger factor (446 aa).

Residues 163–248 form the PPIase FKBP-type domain; sequence GDIVTIDFKG…VRGIKRKKLA (86 aa). The tract at residues 423–446 is disordered; sequence SKPVPPREQGAAGETAETAEATPA. Residues 432–446 show a composition bias toward low complexity; sequence GAAGETAETAEATPA.

It belongs to the FKBP-type PPIase family. Tig subfamily.

It is found in the cytoplasm. It carries out the reaction [protein]-peptidylproline (omega=180) = [protein]-peptidylproline (omega=0). Its function is as follows. Involved in protein export. Acts as a chaperone by maintaining the newly synthesized protein in an open conformation. Functions as a peptidyl-prolyl cis-trans isomerase. This chain is Trigger factor, found in Moorella thermoacetica (strain ATCC 39073 / JCM 9320).